The primary structure comprises 435 residues: GTPase Der (435 aa).

EngA-type G domains are found at residues 4–167 (PVVA…PEKD) and 175–350 (IRFS…DNHN). GTP is bound by residues 10–17 (GRPNVGKS), 57–61 (DTGGI), 119–122 (NKAD), 181–188 (GRPNVGKS), 228–232 (DTAGI), and 293–296 (NKWD). The KH-like domain maps to 351-435 (KRVQSATLND…PIHLIERARK (85 aa)).

It belongs to the TRAFAC class TrmE-Era-EngA-EngB-Septin-like GTPase superfamily. EngA (Der) GTPase family. As to quaternary structure, associates with the 50S ribosomal subunit.

In terms of biological role, GTPase that plays an essential role in the late steps of ribosome biogenesis. In Levilactobacillus brevis (strain ATCC 367 / BCRC 12310 / CIP 105137 / JCM 1170 / LMG 11437 / NCIMB 947 / NCTC 947) (Lactobacillus brevis), this protein is GTPase Der.